A 227-amino-acid chain; its full sequence is Urease accessory protein UreF (227 aa).

The protein belongs to the UreF family. UreD, UreF and UreG form a complex that acts as a GTP-hydrolysis-dependent molecular chaperone, activating the urease apoprotein by helping to assemble the nickel containing metallocenter of UreC. The UreE protein probably delivers the nickel.

It localises to the cytoplasm. In terms of biological role, required for maturation of urease via the functional incorporation of the urease nickel metallocenter. In Blochmanniella floridana, this protein is Urease accessory protein UreF.